The following is a 938-amino-acid chain: Isoleucine--tRNA ligase (938 aa).

Residues 58 to 68 (PYANGNIHIGH) carry the 'HIGH' region motif. Glu561 provides a ligand contact to L-isoleucyl-5'-AMP. Residues 602 to 606 (KMSKS) carry the 'KMSKS' region motif. An ATP-binding site is contributed by Lys605. Zn(2+) contacts are provided by Cys901, Cys904, Cys921, and Cys924.

This sequence belongs to the class-I aminoacyl-tRNA synthetase family. IleS type 1 subfamily. In terms of assembly, monomer. Zn(2+) serves as cofactor.

It localises to the cytoplasm. The enzyme catalyses tRNA(Ile) + L-isoleucine + ATP = L-isoleucyl-tRNA(Ile) + AMP + diphosphate. Its function is as follows. Catalyzes the attachment of isoleucine to tRNA(Ile). As IleRS can inadvertently accommodate and process structurally similar amino acids such as valine, to avoid such errors it has two additional distinct tRNA(Ile)-dependent editing activities. One activity is designated as 'pretransfer' editing and involves the hydrolysis of activated Val-AMP. The other activity is designated 'posttransfer' editing and involves deacylation of mischarged Val-tRNA(Ile). The polypeptide is Isoleucine--tRNA ligase (Yersinia pestis bv. Antiqua (strain Angola)).